Reading from the N-terminus, the 43-residue chain is Photosystem II reaction center protein Psb30 (43 aa).

The chain crosses the membrane as a helical span at residues 15 to 35; the sequence is VIFQLTFVSLILISGPVVIFL.

Belongs to the Psb30/Ycf12 family. PSII is composed of 1 copy each of membrane proteins PsbA, PsbB, PsbC, PsbD, PsbE, PsbF, PsbH, PsbI, PsbJ, PsbK, PsbL, PsbM, PsbT, PsbX, PsbY, PsbZ, Psb30/Ycf12, peripheral proteins PsbO, CyanoQ (PsbQ), PsbU, PsbV and a large number of cofactors. It forms dimeric complexes.

The protein localises to the cellular thylakoid membrane. In terms of biological role, a core subunit of photosystem II (PSII), probably helps stabilize the reaction center. The sequence is that of Photosystem II reaction center protein Psb30 from Picosynechococcus sp. (strain ATCC 27264 / PCC 7002 / PR-6) (Agmenellum quadruplicatum).